A 95-amino-acid polypeptide reads, in one-letter code: Gas vesicle protein S (95 aa).

The protein belongs to the gas vesicle GvpA family.

Its subcellular location is the gas vesicle. Functionally, probably a minor component of the gas vesicle. It is not clear what function gas vesicles perform in soil bacteria. When a minimal gvp locus (gvpA2-gvpR-gvpN-gvpF-gvpG-gvpL-gvpS-gvpK-gvpJ-gvpT-gvpU, called pNL29) is expressed in E.coli gas vesicles are made. The chain is Gas vesicle protein S from Priestia megaterium (Bacillus megaterium).